The sequence spans 379 residues: Retron Se72 reverse transcriptase (379 aa).

The Reverse transcriptase domain maps to 1 to 245 (MNKPRFNGTP…SKLSVTGLWV (245 aa)). The Mg(2+) site is built by Asp-109, Asp-188, and Asp-189.

The protein belongs to the bacterial reverse transcriptase family.

The catalysed reaction is DNA(n) + a 2'-deoxyribonucleoside 5'-triphosphate = DNA(n+1) + diphosphate. Reverse transcriptase (RT) component of antiviral defense system retron Se72, composed of a non-coding RNA (ncRNA), this reverse transcriptase (RT) and the following cold shock-like protein. Expression of retron Se72 confers protection against bacteriophage lambda. At multiplicity of infection (MOI) of 0.02 cultures slow growth when infected with lambda but do not collapse, at MOI 2 cultures enter growth stasis. Responsible for synthesis of msDNA (a branched molecule with RNA linked by a 2',5'-phosphodiester bond to ssDNA). The retron transcript serves as primer (from a conserved internal G residue) and template for the reaction, and codes for the RT. The DNA segment is predicted to be 72 bases long. In Salmonella heidelberg (strain 579083-10), this protein is Retron Se72 reverse transcriptase.